Reading from the N-terminus, the 66-residue chain is Putative antitoxin APE_0279a.1 (66 aa).

It belongs to the UPF0165 family.

Possibly the antitoxin component of a type II toxin-antitoxin (TA) system. This chain is Putative antitoxin APE_0279a.1, found in Aeropyrum pernix (strain ATCC 700893 / DSM 11879 / JCM 9820 / NBRC 100138 / K1).